A 98-amino-acid chain; its full sequence is Flagellar hook-basal body complex protein FliE (98 aa).

Residues 22-56 (KTDNATGAGNTFTQMLDSMSDTQSNAQTSVSNLLT) form a disordered region. Residues 23–56 (TDNATGAGNTFTQMLDSMSDTQSNAQTSVSNLLT) are compositionally biased toward polar residues.

The protein belongs to the FliE family.

The protein localises to the bacterial flagellum basal body. This is Flagellar hook-basal body complex protein FliE from Listeria innocua serovar 6a (strain ATCC BAA-680 / CLIP 11262).